Consider the following 373-residue polypeptide: MFSAQKPIYGNGAGVNMGGGGPSTNNPGSMSMPGVPTSMGPGMNQQIPSGGPMLMGNTPNNNNSNENGENNGNNGNNGGNDANATRNNPNMVNNRGAVHALDDPNVYHWICQLTYGPQKEQALLELGRKREQFDDLAVVLWSSFGVMTSLLNEIISVYPMLQPQMLSNNLSNRVCNALVLLQCVASHPETKHLFLQAHIPLFLFPFLNTTSRQRTFEYLRLTSLGVIGALVKNDSQDVITFLLRTDIVPLCLRIMESSSELSKTVAIFILQKILLDDVGLQYICATLERFYAVTNVLKDMVEHLTVSTPPGRLLKHIIRCYLRLSDDLEARRLLKIVLPAKLRDNTFTEVLRDDVGSKRCLAQLLLTLNEETS.

The disordered stretch occupies residues Met1 to Met91. Gly residues predominate over residues Asn11 to Pro22. Low complexity predominate over residues Gly50–Asn88.

It belongs to the CNOT9 family. Subunit of the 1.0 MDa CCR4-NOT core complex that contains CCR4, CAF1, NOT1, NOT2, NOT3, NOT4, NOT5, CAF40 and CAF130. In the complex interacts with NOT1. The core complex probably is part of a less characterized 1.9 MDa CCR4-NOT complex.

The protein localises to the cytoplasm. It is found in the nucleus. Its function is as follows. Acts as a component of the CCR4-NOT core complex, which in the nucleus seems to be a general transcription factor, and in the cytoplasm the major mRNA deadenylase involved in mRNA turnover. The polypeptide is Protein CAF40 (CAF40) (Saccharomyces cerevisiae (strain ATCC 204508 / S288c) (Baker's yeast)).